Here is a 481-residue protein sequence, read N- to C-terminus: Glycogen synthase (481 aa).

Residue lysine 16 participates in ADP-alpha-D-glucose binding.

Belongs to the glycosyltransferase 1 family. Bacterial/plant glycogen synthase subfamily.

The catalysed reaction is [(1-&gt;4)-alpha-D-glucosyl](n) + ADP-alpha-D-glucose = [(1-&gt;4)-alpha-D-glucosyl](n+1) + ADP + H(+). It participates in glycan biosynthesis; glycogen biosynthesis. Synthesizes alpha-1,4-glucan chains using ADP-glucose. The sequence is that of Glycogen synthase from Lacticaseibacillus casei (strain BL23) (Lactobacillus casei).